Consider the following 336-residue polypeptide: Cytosolic Fe-S cluster assembly factor NBP35 (336 aa).

The segment at 1–20 (MIATQRPFPIPSPVPLAPSS) is disordered. Cys35, Cys49, Cys52, and Cys58 together coordinate [4Fe-4S] cluster. 88-95 (GKGGVGKS) provides a ligand contact to ATP. Cys261 and Cys264 together coordinate [4Fe-4S] cluster.

The protein belongs to the Mrp/NBP35 ATP-binding proteins family. NUBP1/NBP35 subfamily. Heterotetramer of 2 NBP35 and 2 CFD1 chains. [4Fe-4S] cluster serves as cofactor.

The protein localises to the cytoplasm. Component of the cytosolic iron-sulfur (Fe/S) protein assembly (CIA) machinery. Required for maturation of extramitochondrial Fe-S proteins. The NBP35-CFD1 heterotetramer forms a Fe-S scaffold complex, mediating the de novo assembly of an Fe-S cluster and its transfer to target apoproteins. The sequence is that of Cytosolic Fe-S cluster assembly factor NBP35 from Cryptococcus neoformans var. neoformans serotype D (strain B-3501A) (Filobasidiella neoformans).